Reading from the N-terminus, the 198-residue chain is Leucine-rich melanocyte differentiation-associated protein (198 aa).

LRR repeat units lie at residues 2-22 (EKYL…EGLS), 26-47 (SLEE…PGLP), 48-69 (RLHT…LDHL), and 75-95 (ALEY…VSLE). An LRRCT domain is found at 96–134 (KDEEDYKRYRCFVLYKLPNLKFLDAQKVTRQEREEALVR).

In the embryo, expressed in melanoblasts. In the fetus, expressed in melanocytes. Not detected in retinal pigment epithelial cells.

Its function is as follows. Required for melanocyte differentiation. The polypeptide is Leucine-rich melanocyte differentiation-associated protein (Homo sapiens (Human)).